The following is a 467-amino-acid chain: Cytochrome P450 monooxygenase azaI (467 aa).

Positions 1-28 (MESLAQLPGIFLPLAGCVLALSLSALLA) are cleaved as a signal peptide. Cys411 is a binding site for heme.

The protein belongs to the cytochrome P450 family. It depends on heme as a cofactor.

Its pathway is secondary metabolite biosynthesis. In terms of biological role, cytochrome P450 monooxygenase; part of the gene cluster that mediates the biosynthesis of azaphilones, a class of fungal metabolites characterized by a highly oxygenated pyrano-quinone bicyclic core and exhibiting a broad range of bioactivities. In the first step, the non-reducing polyketide synthase azaA forms the hexaketide precursor from successive condensations of five malonyl-CoA units, presumably with a simple acetyl-CoA starter unit. The reactive polyketide chain then undergoes a PT-mediated C2-C7 cyclization to afford the aromatic ring and is eventually released as an aldehyde through the R-domain. The putative ketoreductase azaE is proposed to catalyze the reduction of the terminal ketone resulting in the early culture product FK17-P2a. The monooxygenase azaH was demonstrated to be the only enzyme required to convert FK17-P2a to azanigerone E. AzaH first hydroxylates the benzaldehyde intermediate FK17-P2a at C4, which triggers the formation of the pyran-ring to afford azanigerone E. In parallel, the 2,4-dimethylhexanoyl chain is synthesized by the HR-PKS azaB and is proposed to be transferred to the C4-hydroxyl of azanigerone E by the acyltransferase azaD directly from the ACP domain of azaB. Alternatively, the 2,4-dimethyl-hexanoyl chain may be offloaded from the HR-PKS as a carboxylic acid and converted to an acyl-CoA by azaF. The resulting acyl-CoA molecule could then be taken up as a substrate by AzaD to form azanigerone B. To yield the carboxylic acid substituent in azanigerone A, the hydroxypropyl side chain of azanigerone B would need to undergo a C-C oxidative cleavage catalyzed by cytochrome P450 AzaI. AzaI is proposed to act on a vicinal diol that leads to a C-C bond scission either through an alkoxyradical intermediate or a peroxy complex. In the biosynthesis of azanigerone A, azanigerone B first undergoes hydroxylation at C10, possibly catalyzed by one of the two FAD-dependent monooxygenases encoded in the cluster, azaG or azaL, resulting in the vicinal diol azanigerone C. Oxidative cleavage of azanigerone C by azaI would yield the corresponding aldehyde derivative of azanigerone A. Finally, the dehydrogenase azaJ is proposed to convert the aldehyde functional group into the carboxylic acid, completing the conversion from azanigerone B to azanigerone A. Alternatively, the oxidation of aldehyde to carboxylic acid may be catalyzed by the same P450 enzyme azaI via consecutive oxidation or by endogenous alcohol dehydrogenase. The sequence is that of Cytochrome P450 monooxygenase azaI from Aspergillus niger (strain ATCC 1015 / CBS 113.46 / FGSC A1144 / LSHB Ac4 / NCTC 3858a / NRRL 328 / USDA 3528.7).